A 313-amino-acid chain; its full sequence is Formimidoylglutamase (313 aa).

Mn(2+)-binding residues include histidine 130, aspartate 155, histidine 157, aspartate 159, aspartate 241, and aspartate 243.

Belongs to the arginase family. Mn(2+) serves as cofactor.

The catalysed reaction is N-formimidoyl-L-glutamate + H2O = formamide + L-glutamate. It functions in the pathway amino-acid degradation; L-histidine degradation into L-glutamate; L-glutamate from N-formimidoyl-L-glutamate (hydrolase route): step 1/1. Its function is as follows. Catalyzes the conversion of N-formimidoyl-L-glutamate to L-glutamate and formamide. This Salmonella paratyphi A (strain ATCC 9150 / SARB42) protein is Formimidoylglutamase.